A 229-amino-acid polypeptide reads, in one-letter code: Thymidylate kinase (229 aa).

9–16 (GPEGSGKS) lines the ATP pocket.

It belongs to the thymidylate kinase family.

The catalysed reaction is dTMP + ATP = dTDP + ADP. Its function is as follows. Phosphorylation of dTMP to form dTDP in both de novo and salvage pathways of dTTP synthesis. The protein is Thymidylate kinase of Roseiflexus castenholzii (strain DSM 13941 / HLO8).